Reading from the N-terminus, the 235-residue chain is Transmembrane emp24 domain-containing protein 9 (235 aa).

Positions 1-37 are cleaved as a signal peptide; sequence MAVELGVLLVRPRPGTGLGRVMRTLLLVLWLATRGSA. Residues 38–202 are Lumenal-facing; the sequence is LYFHIGETEK…RQTSESTNQR (165 aa). The GOLD domain occupies 47–145; sequence KKCFIEEIPD…MLRVHLDIQV (99 aa). Residues 121–160 form a required for interaction with STX17 region; that stretch reads CLHSNSTKFSLFAGGMLRVHLDIQVGEHANDYAEIAAKDK. N-linked (GlcNAc...) asparagine glycosylation occurs at Asn125. Residues 154–184 adopt a coiled-coil conformation; that stretch reads EIAAKDKLSELQLRVRQLVEQVEQIQKEQNY. Position 160 is an N6-acetyllysine (Lys160). Residues 203–222 form a helical membrane-spanning segment; it reads VLWWSILQTLILVAIGVWQM. Residues 223 to 235 are Cytoplasmic-facing; that stretch reads RHLKSFFEAKKLV. The COPII vesicle coat-binding signature appears at 228-229; the sequence is FF. A COPI vesicle coat-binding motif is present at residues 228-235; sequence FFEAKKLV.

The protein belongs to the EMP24/GP25L family. In terms of assembly, monomer and homodimer in endoplasmic reticulum. Predominantly monomeric and to lesser extent homodimeric in endoplasmic reticulum-Golgi intermediate compartment and cis-Golgi network. Probably oligomerizes with other members of the EMP24/GP25L family such as TMED2, TMED7 and TMED10. Interacts with TMED5. Interacts (via C-terminus) with COPG1; the interaction involves dimeric TMED9. Interacts with PTPN2 and SPAST. Interacts with STX17; the interaction is direct. In terms of processing, N-linked glycosylated containing high mannose.

The protein resides in the endoplasmic reticulum membrane. It is found in the golgi apparatus. It localises to the cis-Golgi network membrane. Its subcellular location is the endoplasmic reticulum-Golgi intermediate compartment membrane. The protein localises to the trans-Golgi network membrane. Its function is as follows. Appears to be involved in vesicular protein trafficking, mainly in the early secretory pathway. In COPI vesicle-mediated retrograde transport involved in the coatomer recruitment to membranes of the early secretory pathway. Increases coatomer-dependent activity of ARFGAP2. Thought to play a crucial role in the specific retention of p24 complexes in cis-Golgi membranes; specifically contributes to the coupled localization of TMED2 and TMED10 in the cis-Golgi network. May be involved in organization of intracellular membranes, such as of the ER-Golgi intermediate compartment and the Golgi apparatus. Involved in ER localization of PTPN2 isoform PTPB. This Homo sapiens (Human) protein is Transmembrane emp24 domain-containing protein 9 (TMED9).